A 220-amino-acid chain; its full sequence is 5-hmdU DNA kinase 1 (220 aa).

This sequence belongs to the thymidylate kinase family. 5-hmdU DNA kinase subfamily.

It carries out the reaction 5-hydroxymethyl-dUMP in DNA + ATP = 5-phosphomethyl-dUMP in DNA + ADP + H(+). Its function is as follows. Phosphorylates 5-hydroxymethyluracil (5hmdU) into 5-phosphomethyl-2'-deoxyuridine (5- PmdU) on DNA as a step in the pathway leading to thymidine hypermodifications in the viral genome. The phosphate is added internally to the DNA polymer. As a final result of the pathway of hypermodification, 5-aminoethoxy-2'-deoxymethyluridine (5-NeOmdU) substitutes for about 40% of the thymidines in the viral DNA. These modifications probably prevent degradation of viral genome by the host restriction-modification antiviral defense system. This is 5-hmdU DNA kinase 1 from Salmonella phage ViI.